The following is a 459-amino-acid chain: Argininosuccinate lyase (459 aa).

It belongs to the lyase 1 family. Argininosuccinate lyase subfamily.

The protein resides in the cytoplasm. The enzyme catalyses 2-(N(omega)-L-arginino)succinate = fumarate + L-arginine. The protein operates within amino-acid biosynthesis; L-arginine biosynthesis; L-arginine from L-ornithine and carbamoyl phosphate: step 3/3. The sequence is that of Argininosuccinate lyase from Lactococcus lactis subsp. cremoris (strain SK11).